A 656-amino-acid polypeptide reads, in one-letter code: uncharacterized protein (656 aa).

3 consecutive transmembrane segments (helical) span residues 7 to 27 (QQVLTFVSSLSTFVTIILNHL), 40 to 60 (LMAMTTLMVSLLMSSLTFWTL), and 210 to 230 (AVFISIWLMVILGAAFNAFTI). Residues 231–280 (TRPIRELLTGVKNIASGDFYQRIDLPFGGELGALIFNFNEMAERLEKYEQ) enclose the HAMP domain. Residues 289–359 (EKAKLETLVS…PILNDIIRKN (71 aa)) form the PAS domain. Residues 424–654 (NVSHELRTPL…CFFFDLMIAK (231 aa)) enclose the Histidine kinase domain. The residue at position 427 (H427) is a Phosphohistidine; by autocatalysis.

It is found in the plastid. The protein localises to the chloroplast membrane. It carries out the reaction ATP + protein L-histidine = ADP + protein N-phospho-L-histidine.. This is an uncharacterized protein from Porphyra purpurea (Red seaweed).